A 588-amino-acid polypeptide reads, in one-letter code: WD repeat-containing protein DDB_G0349043 (588 aa).

The interval 1-32 (MPLDNKVQLNENGKEVNNNNNNDEDLKIQDNH) is disordered. The 33-residue stretch at 40 to 72 (NRSELVRLLIQSLNSLGYDKSAEFLEKDSGISL) folds into the LisH domain. The 57-residue stretch at 73–129 (QSKEINQFSECVVSGDWNKVEELLPFLKLNEFDTNNVKFLVYSQKFLEYLENHKIKE) folds into the CTLH domain. WD repeat units follow at residues 244–283 (KHRD…LDQP), 294–333 (GHTK…LLKT), and 336–375 (KHSD…LTNS). The segment at 376–403 (NNNNNNHNNNNSNINGNSINGSNNNGNN) is disordered. WD repeat units lie at residues 413–452 (WACA…TPEV), 455–494 (METD…IVQK), 499–539 (KQGR…LLET), and 542–582 (RHSG…NSFI).

This chain is WD repeat-containing protein DDB_G0349043, found in Dictyostelium discoideum (Social amoeba).